Here is a 131-residue protein sequence, read N- to C-terminus: MTSRFMLIFAAISGFIFVALGAFGAHVLSKTMGAVEMGWIQTGLEYQAFHTLAILGLAVAMQRRISIWFYWSSVFLALGTVLFSGSLYCLALSHLRLWAFVTPVGGVSFLAGWALMLVGAIRLKRKGVSHE.

The Periplasmic segment spans residues 1-4 (MTSR). The chain crosses the membrane as a helical span at residues 5–25 (FMLIFAAISGFIFVALGAFGA). Over 26–64 (HVLSKTMGAVEMGWIQTGLEYQAFHTLAILGLAVAMQRR) the chain is Cytoplasmic. Residues 65-85 (ISIWFYWSSVFLALGTVLFSG) form a helical membrane-spanning segment. The Periplasmic portion of the chain corresponds to 86–97 (SLYCLALSHLRL). A helical transmembrane segment spans residues 98-118 (WAFVTPVGGVSFLAGWALMLV). The Cytoplasmic portion of the chain corresponds to 119–131 (GAIRLKRKGVSHE).

The protein belongs to the UPF0382 family.

The protein resides in the cell inner membrane. The sequence is that of UPF0382 inner membrane protein YgdD (ygdD) from Escherichia coli O157:H7.